The primary structure comprises 187 residues: uncharacterized protein (187 aa).

This is an uncharacterized protein from Acanthamoeba polyphaga mimivirus (APMV).